The primary structure comprises 117 residues: Large ribosomal subunit protein bL20 (117 aa).

Belongs to the bacterial ribosomal protein bL20 family.

In terms of biological role, binds directly to 23S ribosomal RNA and is necessary for the in vitro assembly process of the 50S ribosomal subunit. It is not involved in the protein synthesizing functions of that subunit. The chain is Large ribosomal subunit protein bL20 from Lawsonia intracellularis (strain PHE/MN1-00).